We begin with the raw amino-acid sequence, 448 residues long: C4-dicarboxylate transport protein (448 aa).

The next 9 membrane-spanning stretches (helical) occupy residues 9 to 29 (SLYFQVIVAIIAGILVGHFYP), 59 to 79 (LIKMIIAPVIFCTVVSGIAGM), 91 to 111 (VALLYFEVVSTIALLIGLLVI), 159 to 179 (AFANGEILQVLLFAIMFGFAL), 203 to 223 (IVNMIMKLAPIGAFGAMAFTI), 237 to 257 (LIICFYVTCLLFIFIVLGTIS), 312 to 332 (GYSFNLDGTSIYLTMAAIFIA), 345 to 365 (ITLLLVLLISSKGAAGVTGSG), and 367 to 387 (IVMAATLSAVGHIPVAGLALI).

This sequence belongs to the dicarboxylate/amino acid:cation symporter (DAACS) (TC 2.A.23) family.

It is found in the cell inner membrane. Functionally, responsible for the transport of dicarboxylates such as succinate, fumarate, and malate from the periplasm across the membrane. The sequence is that of C4-dicarboxylate transport protein from Acinetobacter baylyi (strain ATCC 33305 / BD413 / ADP1).